Reading from the N-terminus, the 291-residue chain is 4-diphosphocytidyl-2-C-methyl-D-erythritol kinase (291 aa).

The active site involves Lys-10. Residue 99-109 (PMGGGLGGGSS) coordinates ATP. The active site involves Asp-141.

It belongs to the GHMP kinase family. IspE subfamily. As to quaternary structure, homodimer.

It catalyses the reaction 4-CDP-2-C-methyl-D-erythritol + ATP = 4-CDP-2-C-methyl-D-erythritol 2-phosphate + ADP + H(+). The protein operates within isoprenoid biosynthesis; isopentenyl diphosphate biosynthesis via DXP pathway; isopentenyl diphosphate from 1-deoxy-D-xylulose 5-phosphate: step 3/6. Catalyzes the phosphorylation of the position 2 hydroxy group of 4-diphosphocytidyl-2C-methyl-D-erythritol. In Proteus mirabilis (strain HI4320), this protein is 4-diphosphocytidyl-2-C-methyl-D-erythritol kinase.